The following is a 381-amino-acid chain: L-lactate dehydrogenase (381 aa).

The region spanning 1-380 (MIISSTNDYR…TRDALVDLSK (380 aa)) is the FMN hydroxy acid dehydrogenase domain. Y24 contributes to the substrate binding site. FMN-binding residues include S106 and Q127. Substrate is bound at residue Y129. Residue T155 coordinates FMN. R164 is a binding site for substrate. K251 is an FMN binding site. Residue H275 is the Proton acceptor of the active site. Substrate is bound at residue R278. 306 to 330 (DSGIRNGLDIVRMLALGADATMLGR) is a binding site for FMN.

Belongs to the FMN-dependent alpha-hydroxy acid dehydrogenase family. FMN serves as cofactor.

The protein localises to the cell inner membrane. It catalyses the reaction (S)-lactate + A = pyruvate + AH2. Catalyzes the conversion of L-lactate to pyruvate. Is coupled to the respiratory chain. The polypeptide is L-lactate dehydrogenase (Actinobacillus pleuropneumoniae serotype 3 (strain JL03)).